The primary structure comprises 87 residues: Large ribosomal subunit protein bL28 (87 aa).

This sequence belongs to the bacterial ribosomal protein bL28 family.

The sequence is that of Large ribosomal subunit protein bL28 from Methylacidiphilum infernorum (isolate V4) (Methylokorus infernorum (strain V4)).